The primary structure comprises 180 residues: Crossover junction endodeoxyribonuclease RuvC (180 aa).

Catalysis depends on residues aspartate 7, glutamate 66, and aspartate 138. Residues aspartate 7, glutamate 66, and aspartate 138 each coordinate Mg(2+).

The protein belongs to the RuvC family. Homodimer which binds Holliday junction (HJ) DNA. The HJ becomes 2-fold symmetrical on binding to RuvC with unstacked arms; it has a different conformation from HJ DNA in complex with RuvA. In the full resolvosome a probable DNA-RuvA(4)-RuvB(12)-RuvC(2) complex forms which resolves the HJ. It depends on Mg(2+) as a cofactor.

It is found in the cytoplasm. The enzyme catalyses Endonucleolytic cleavage at a junction such as a reciprocal single-stranded crossover between two homologous DNA duplexes (Holliday junction).. The RuvA-RuvB-RuvC complex processes Holliday junction (HJ) DNA during genetic recombination and DNA repair. Endonuclease that resolves HJ intermediates. Cleaves cruciform DNA by making single-stranded nicks across the HJ at symmetrical positions within the homologous arms, yielding a 5'-phosphate and a 3'-hydroxyl group; requires a central core of homology in the junction. The consensus cleavage sequence is 5'-(A/T)TT(C/G)-3'. Cleavage occurs on the 3'-side of the TT dinucleotide at the point of strand exchange. HJ branch migration catalyzed by RuvA-RuvB allows RuvC to scan DNA until it finds its consensus sequence, where it cleaves and resolves the cruciform DNA. In Burkholderia vietnamiensis (strain G4 / LMG 22486) (Burkholderia cepacia (strain R1808)), this protein is Crossover junction endodeoxyribonuclease RuvC.